Consider the following 36-residue polypeptide: Cytochrome b6-f complex subunit 5 (36 aa).

A helical membrane pass occupies residues 5-25 (LLAGIVLGLVPVTLAGLFVAA).

This sequence belongs to the PetG family. In terms of assembly, the 4 large subunits of the cytochrome b6-f complex are cytochrome b6, subunit IV (17 kDa polypeptide, PetD), cytochrome f and the Rieske protein, while the 4 small subunits are PetG, PetL, PetM and PetN. The complex functions as a dimer.

Its subcellular location is the cellular thylakoid membrane. Its function is as follows. Component of the cytochrome b6-f complex, which mediates electron transfer between photosystem II (PSII) and photosystem I (PSI), cyclic electron flow around PSI, and state transitions. PetG is required for either the stability or assembly of the cytochrome b6-f complex. This Acaryochloris marina (strain MBIC 11017) protein is Cytochrome b6-f complex subunit 5.